The sequence spans 371 residues: MSFELLATDGKARRGRITFPRGTVETPAFMPVGTYGTVKGMLPRDIEAIGAEMILGNTFHLWLRPGTEVIKKHNGLHDFMQWKGPILTDSGGFQVFSLGAMRKIKEEGVTFASPVDGSKVFMGPEESMQVQRDLGSDVVMIFDECTPYPAEHDVARTSMELSLRWAQRSKNAHADNTAALFGIVQGGMYQDLRMRSLEGLENIGFDGLAIGGLSVGEPKHEMIKVLDYLPDQMPADKPRYLMGVGKPEDLVEGVRRGVDMFDCVMPTRNARNGHLFVDTGVIKIRNAFHRHDESPLDPTCDCYTCTNFSRAYLHHLDKCGEMLSSMLNTIHNLRHYQRLMAGLREAIQQGKLAAFVDAFYAKRGLPVPPLD.

Residue aspartate 89 is the Proton acceptor of the active site. Residues 89–93, aspartate 143, glutamine 185, and glycine 212 each bind substrate; that span reads DSGGF. The segment at 243-249 is RNA binding; it reads GVGKPED. Residue aspartate 262 is the Nucleophile of the active site. The segment at 267–271 is RNA binding; important for wobble base 34 recognition; the sequence is TRNAR. Residues cysteine 300, cysteine 302, cysteine 305, and histidine 331 each contribute to the Zn(2+) site.

It belongs to the queuine tRNA-ribosyltransferase family. Homodimer. Within each dimer, one monomer is responsible for RNA recognition and catalysis, while the other monomer binds to the replacement base PreQ1. Zn(2+) is required as a cofactor.

The catalysed reaction is 7-aminomethyl-7-carbaguanine + guanosine(34) in tRNA = 7-aminomethyl-7-carbaguanosine(34) in tRNA + guanine. It functions in the pathway tRNA modification; tRNA-queuosine biosynthesis. In terms of biological role, catalyzes the base-exchange of a guanine (G) residue with the queuine precursor 7-aminomethyl-7-deazaguanine (PreQ1) at position 34 (anticodon wobble position) in tRNAs with GU(N) anticodons (tRNA-Asp, -Asn, -His and -Tyr). Catalysis occurs through a double-displacement mechanism. The nucleophile active site attacks the C1' of nucleotide 34 to detach the guanine base from the RNA, forming a covalent enzyme-RNA intermediate. The proton acceptor active site deprotonates the incoming PreQ1, allowing a nucleophilic attack on the C1' of the ribose to form the product. After dissociation, two additional enzymatic reactions on the tRNA convert PreQ1 to queuine (Q), resulting in the hypermodified nucleoside queuosine (7-(((4,5-cis-dihydroxy-2-cyclopenten-1-yl)amino)methyl)-7-deazaguanosine). This Pseudomonas putida (strain ATCC 47054 / DSM 6125 / CFBP 8728 / NCIMB 11950 / KT2440) protein is Queuine tRNA-ribosyltransferase.